Consider the following 73-residue polypeptide: Large ribosomal subunit protein uL24 (73 aa).

Basic and acidic residues predominate over residues 53-65 (NPKGGFIKKEKPM). The tract at residues 53 to 73 (NPKGGFIKKEKPMHISNVKKA) is disordered.

The protein belongs to the universal ribosomal protein uL24 family. In terms of assembly, part of the 50S ribosomal subunit.

In terms of biological role, one of two assembly initiator proteins, it binds directly to the 5'-end of the 23S rRNA, where it nucleates assembly of the 50S subunit. Its function is as follows. One of the proteins that surrounds the polypeptide exit tunnel on the outside of the subunit. The protein is Large ribosomal subunit protein uL24 of Helicobacter pylori (strain J99 / ATCC 700824) (Campylobacter pylori J99).